Consider the following 156-residue polypeptide: Arginine repressor (156 aa).

This sequence belongs to the ArgR family.

The protein resides in the cytoplasm. The protein operates within amino-acid biosynthesis; L-arginine biosynthesis [regulation]. In terms of biological role, regulates arginine biosynthesis genes. In Vibrio vulnificus (strain CMCP6), this protein is Arginine repressor.